A 518-amino-acid chain; its full sequence is Cytochrome P450 709B3 (518 aa).

Residues 3 to 23 (LISTINLLTIVLLLFVVSKIW) traverse the membrane as a helical segment. Cys-465 provides a ligand contact to heme.

It belongs to the cytochrome P450 family. Heme serves as cofactor. Highly expressed in rosette leaves and siliques, and at lower levels in flowers.

The protein localises to the membrane. Plays a role in abscisic acid (ABA) and salt stress response. May regulate the salt stress response independently of well-characterized pathways. Does not function as cytokinin hydroxylase in yeast heterologous system. This chain is Cytochrome P450 709B3, found in Arabidopsis thaliana (Mouse-ear cress).